The sequence spans 209 residues: MTTALDLALNAADGALRTLFAKPRASRTCPTVPAQATELSLEDKALSGALMRVNHVGEVCAQALYAAQALGTRDAVLRKHFLKASQEEGDHLAWTKDRLDELGARPSLLNPLWYAGAFGLGLVASRLGDRLSLGFVVETERQVEAHLASHLERLPEGDHESRAIVAQMKDDEALHASAAEDAGALQLPAPVKMLMRSAAKVMTTVAHRI.

Glu-58, Glu-88, His-91, Glu-140, Glu-172, and His-175 together coordinate Fe cation.

This sequence belongs to the COQ7 family. It depends on Fe cation as a cofactor.

The protein resides in the cell membrane. It carries out the reaction a 5-methoxy-2-methyl-3-(all-trans-polyprenyl)benzene-1,4-diol + AH2 + O2 = a 3-demethylubiquinol + A + H2O. Its pathway is cofactor biosynthesis; ubiquinone biosynthesis. In terms of biological role, catalyzes the hydroxylation of 2-nonaprenyl-3-methyl-6-methoxy-1,4-benzoquinol during ubiquinone biosynthesis. This Polaromonas naphthalenivorans (strain CJ2) protein is 3-demethoxyubiquinol 3-hydroxylase.